Here is a 100-residue protein sequence, read N- to C-terminus: Small ribosomal subunit protein uS14c (100 aa).

Belongs to the universal ribosomal protein uS14 family. Part of the 30S ribosomal subunit.

Its subcellular location is the plastid. The protein localises to the chloroplast. In terms of biological role, binds 16S rRNA, required for the assembly of 30S particles. The chain is Small ribosomal subunit protein uS14c from Physcomitrium patens (Spreading-leaved earth moss).